The sequence spans 123 residues: D-ribose pyranase (123 aa).

Residue H20 is the Proton donor of the active site. Substrate-binding positions include D28, H90, and 112–114; that span reads YAN.

The protein belongs to the RbsD / FucU family. RbsD subfamily. As to quaternary structure, homodecamer.

Its subcellular location is the cytoplasm. The enzyme catalyses beta-D-ribopyranose = beta-D-ribofuranose. It participates in carbohydrate metabolism; D-ribose degradation; D-ribose 5-phosphate from beta-D-ribopyranose: step 1/2. Its function is as follows. Catalyzes the interconversion of beta-pyran and beta-furan forms of D-ribose. The polypeptide is D-ribose pyranase (Corynebacterium glutamicum (strain ATCC 13032 / DSM 20300 / JCM 1318 / BCRC 11384 / CCUG 27702 / LMG 3730 / NBRC 12168 / NCIMB 10025 / NRRL B-2784 / 534)).